Reading from the N-terminus, the 87-residue chain is Toxin CsEv3 (87 aa).

An N-terminal signal peptide occupies residues 1-19; sequence MNSLLMITACLFLIGTVWA. The LCN-type CS-alpha/beta domain maps to 20 to 85; it reads KEGYLVNKST…TYPLPNKSCG (66 aa). 4 cysteine pairs are disulfide-bonded: cysteine 31-cysteine 84, cysteine 35-cysteine 60, cysteine 44-cysteine 65, and cysteine 48-cysteine 67. The residue at position 84 (cysteine 84) is a Cysteine amide.

It belongs to the long (4 C-C) scorpion toxin superfamily. Sodium channel inhibitor family. Beta subfamily. In terms of tissue distribution, expressed by the venom gland.

It localises to the secreted. Functionally, beta toxins bind voltage-independently at site-4 of sodium channels (Nav) and shift the voltage of activation toward more negative potentials thereby affecting sodium channel activation and promoting spontaneous and repetitive firing. Induces immediate paralysis in crickets after injection, with a total paralysis occurring within 15-30 minutes and lasting for 1-2 hours. Is also lethal to vertebrate (chicks) when injected in very high dosages (more that 100 mg/kg). The polypeptide is Toxin CsEv3 (Centruroides sculpturatus (Arizona bark scorpion)).